A 255-amino-acid chain; its full sequence is Ribonuclease HII (255 aa).

The 190-residue stretch at 58-247 (RYIAGIDEAG…VKSMVLGARY (190 aa)) folds into the RNase H type-2 domain. A divalent metal cation is bound by residues Asp-64, Glu-65, and Asp-156.

This sequence belongs to the RNase HII family. Mn(2+) serves as cofactor. The cofactor is Mg(2+).

It localises to the cytoplasm. It carries out the reaction Endonucleolytic cleavage to 5'-phosphomonoester.. Its function is as follows. Endonuclease that specifically degrades the RNA of RNA-DNA hybrids. The polypeptide is Ribonuclease HII (Syntrophomonas wolfei subsp. wolfei (strain DSM 2245B / Goettingen)).